Consider the following 273-residue polypeptide: 3-methyl-2-oxobutanoate hydroxymethyltransferase (273 aa).

Residues D53 and D92 each contribute to the Mg(2+) site. Residues 53–54, D92, and K120 contribute to the 3-methyl-2-oxobutanoate site; that span reads DS. Residue E122 participates in Mg(2+) binding. E189 acts as the Proton acceptor in catalysis.

Belongs to the PanB family. In terms of assembly, homodecamer; pentamer of dimers. Requires Mg(2+) as cofactor.

It is found in the cytoplasm. The enzyme catalyses 3-methyl-2-oxobutanoate + (6R)-5,10-methylene-5,6,7,8-tetrahydrofolate + H2O = 2-dehydropantoate + (6S)-5,6,7,8-tetrahydrofolate. The protein operates within cofactor biosynthesis; (R)-pantothenate biosynthesis; (R)-pantoate from 3-methyl-2-oxobutanoate: step 1/2. Its function is as follows. Catalyzes the reversible reaction in which hydroxymethyl group from 5,10-methylenetetrahydrofolate is transferred onto alpha-ketoisovalerate to form ketopantoate. This is 3-methyl-2-oxobutanoate hydroxymethyltransferase from Cupriavidus pinatubonensis (strain JMP 134 / LMG 1197) (Cupriavidus necator (strain JMP 134)).